The chain runs to 264 residues: Ribosomal RNA small subunit methyltransferase A (264 aa).

S-adenosyl-L-methionine is bound by residues asparagine 12, leucine 14, glycine 40, glutamate 61, aspartate 86, and asparagine 105.

This sequence belongs to the class I-like SAM-binding methyltransferase superfamily. rRNA adenine N(6)-methyltransferase family. RsmA subfamily.

The protein resides in the cytoplasm. The catalysed reaction is adenosine(1518)/adenosine(1519) in 16S rRNA + 4 S-adenosyl-L-methionine = N(6)-dimethyladenosine(1518)/N(6)-dimethyladenosine(1519) in 16S rRNA + 4 S-adenosyl-L-homocysteine + 4 H(+). In terms of biological role, specifically dimethylates two adjacent adenosines (A1518 and A1519) in the loop of a conserved hairpin near the 3'-end of 16S rRNA in the 30S particle. May play a critical role in biogenesis of 30S subunits. This chain is Ribosomal RNA small subunit methyltransferase A, found in Fusobacterium nucleatum subsp. nucleatum (strain ATCC 25586 / DSM 15643 / BCRC 10681 / CIP 101130 / JCM 8532 / KCTC 2640 / LMG 13131 / VPI 4355).